The chain runs to 476 residues: Ubiquitin-conjugating enzyme E2 variant 3 (476 aa).

The UEV domain occupies 2 to 145; the sequence is EFSAETLRQQ…EEELPLYSLS (144 aa). 185-213 provides a ligand contact to NAD(+); that stretch reads GDMALACLLAVSAKGTAGKLLLLDPTDGE.

This sequence in the N-terminal section; belongs to the ubiquitin-conjugating enzyme family. UEV subfamily. It in the C-terminal section; belongs to the LDH/MDH superfamily. Homodimer.

Possible negative regulator of polyubiquitination. In Xenopus tropicalis (Western clawed frog), this protein is Ubiquitin-conjugating enzyme E2 variant 3 (uevld).